A 290-amino-acid chain; its full sequence is Cbb3-type cytochrome c oxidase subunit FixP (290 aa).

Residues 1-32 are Cytoplasmic-facing; it reads MTDHSEFDSVSGKTTTGHEWDGIKELNTPLPR. A helical membrane pass occupies residues 33 to 53; sequence WWVICFYLTIVWAIGYWIVYP. Topologically, residues 54–290 are periplasmic; the sequence is AWPLISSNTT…VYVHSLGGGK (237 aa). Cytochrome c domains lie at 109 to 198 and 206 to 287; these read LARA…RSLS and YDAA…HSLG. Residues Cys-122, Cys-125, His-126, Met-173, Cys-219, Cys-222, His-223, and Met-264 each contribute to the heme c site.

This sequence belongs to the CcoP / FixP family. As to quaternary structure, component of the cbb3-type cytochrome c oxidase at least composed of FixN, FixO, FixQ and FixP. Requires heme c as cofactor.

The protein localises to the cell inner membrane. The protein operates within energy metabolism; oxidative phosphorylation. Functionally, C-type cytochrome. Part of the cbb3-type cytochrome c oxidase complex. FixP subunit is required for transferring electrons from donor cytochrome c via its heme groups to FixO subunit. From there, electrons are shuttled to the catalytic binuclear center of FixN subunit where oxygen reduction takes place. The complex also functions as a proton pump. The chain is Cbb3-type cytochrome c oxidase subunit FixP from Bradyrhizobium diazoefficiens (strain JCM 10833 / BCRC 13528 / IAM 13628 / NBRC 14792 / USDA 110).